Reading from the N-terminus, the 371-residue chain is Glycerate kinase (371 aa).

It belongs to the glycerate kinase type-1 family.

The enzyme catalyses (R)-glycerate + ATP = (2R)-3-phosphoglycerate + ADP + H(+). In Neisseria meningitidis serogroup B (strain ATCC BAA-335 / MC58), this protein is Glycerate kinase (glxK).